Reading from the N-terminus, the 221-residue chain is MKNGLTFALPKGTLFPDTVRLLYKAGFLKKEEVLLESRKLVIKDGPYTFIICRPTDIPTFVEHGAADLGIVGKDVIEEQRREIFELLDLKYGKCHFAVAAPRDNPKVHDLGKLTEVRAASKFPEVTRRFFKGLGVRAEVIKMHGNVELAPLVGLADVIVDLVSTGRTLRENNLIEITKIMDITARLVANRVAARVYDREIKAIVKKFKNLVGGEKNEVNLK.

The protein belongs to the ATP phosphoribosyltransferase family. Short subfamily. Heteromultimer composed of HisG and HisZ subunits.

Its subcellular location is the cytoplasm. The catalysed reaction is 1-(5-phospho-beta-D-ribosyl)-ATP + diphosphate = 5-phospho-alpha-D-ribose 1-diphosphate + ATP. The protein operates within amino-acid biosynthesis; L-histidine biosynthesis; L-histidine from 5-phospho-alpha-D-ribose 1-diphosphate: step 1/9. Functionally, catalyzes the condensation of ATP and 5-phosphoribose 1-diphosphate to form N'-(5'-phosphoribosyl)-ATP (PR-ATP). Has a crucial role in the pathway because the rate of histidine biosynthesis seems to be controlled primarily by regulation of HisG enzymatic activity. In Carboxydothermus hydrogenoformans (strain ATCC BAA-161 / DSM 6008 / Z-2901), this protein is ATP phosphoribosyltransferase.